A 479-amino-acid chain; its full sequence is GTPase Obg (479 aa).

In terms of domain architecture, Obg spans 2 to 159 (PRFVDRVVIH…RDLTLELKTV (158 aa)). The 181-residue stretch at 160 to 340 (ADVGLVGFPS…LIFGLSQMIS (181 aa)) folds into the OBG-type G domain. GTP-binding positions include 166-173 (GFPSAGKS), 191-195 (FTTLV), 212-215 (DVPG), 292-295 (NKID), and 321-323 (STA). 2 residues coordinate Mg(2+): S173 and T193. One can recognise an OCT domain in the interval 358–436 (PIPVDDSGFT…IGEMTFDWEP (79 aa)). Residues 434-479 (WEPQTPAGEPVAMSGRGTDPRLDSNKRVGAAERKAARSRRREHGDG) are disordered. Residues 451–468 (TDPRLDSNKRVGAAERKA) are compositionally biased toward basic and acidic residues. Positions 469–479 (ARSRRREHGDG) are enriched in basic residues.

Belongs to the TRAFAC class OBG-HflX-like GTPase superfamily. OBG GTPase family. As to quaternary structure, monomer. Requires Mg(2+) as cofactor.

The protein localises to the cytoplasm. Its function is as follows. An essential GTPase which binds GTP, GDP and possibly (p)ppGpp with moderate affinity, with high nucleotide exchange rates and a fairly low GTP hydrolysis rate. Plays a role in control of the cell cycle, stress response, ribosome biogenesis and in those bacteria that undergo differentiation, in morphogenesis control. The sequence is that of GTPase Obg from Mycobacterium tuberculosis (strain ATCC 25177 / H37Ra).